Here is a 769-residue protein sequence, read N- to C-terminus: 5-methyltetrahydropteroyltriglutamate--homocysteine methyltransferase (769 aa).

Residues 18-21 (RELK) and K127 contribute to the 5-methyltetrahydropteroyltri-L-glutamate site. L-homocysteine is bound by residues 447–449 (IGS) and E500. L-methionine contacts are provided by residues 447-449 (IGS) and E500. Residues 531–532 (RC) and W577 each bind 5-methyltetrahydropteroyltri-L-glutamate. D615 contributes to the L-homocysteine binding site. L-methionine is bound at residue D615. E621 is a binding site for 5-methyltetrahydropteroyltri-L-glutamate. Zn(2+)-binding residues include H657, C659, and E681. The active-site Proton donor is H710. C742 lines the Zn(2+) pocket.

It belongs to the vitamin-B12 independent methionine synthase family. Zn(2+) serves as cofactor.

The catalysed reaction is 5-methyltetrahydropteroyltri-L-glutamate + L-homocysteine = tetrahydropteroyltri-L-glutamate + L-methionine. It participates in amino-acid biosynthesis; L-methionine biosynthesis via de novo pathway; L-methionine from L-homocysteine (MetE route): step 1/1. Functionally, catalyzes the transfer of a methyl group from 5-methyltetrahydrofolate to homocysteine resulting in methionine formation. The sequence is that of 5-methyltetrahydropteroyltriglutamate--homocysteine methyltransferase from Chelativorans sp. (strain BNC1).